We begin with the raw amino-acid sequence, 194 residues long: Recombination protein RecR (194 aa).

Residues 55 to 70 (CRECGNLAEGELCPIC) form a C4-type zinc finger. In terms of domain architecture, Toprim spans 78-171 (SLLAVVESVA…RVTRPAYGLP (94 aa)).

This sequence belongs to the RecR family.

May play a role in DNA repair. It seems to be involved in an RecBC-independent recombinational process of DNA repair. It may act with RecF and RecO. The sequence is that of Recombination protein RecR from Thermus thermophilus (strain ATCC 27634 / DSM 579 / HB8).